We begin with the raw amino-acid sequence, 348 residues long: MTDPSRLVTPERRGDDLGDAALRPQNLSEFVGQEKARANLQVFIDAARKRKEALDHVLFVGPPGLGKTTLAQIVARELGVGFRATSGPVIAKAGDLAALLTNLEERDVLFIDEIHRLSPAVEEVLYPAMEDFQLDLIIGEGPAARSVKIELSKFTLVGATTRAGLLTNPLRDRFGIPVRLNFYTIEELESIVSRGARVLGTGITADGANEIARRARGTPRIAGRLLRRVRDFASAADAEAIDRKIADHALGALEVDAAGLDAMDRRYLSTIALNYGGGPVGVETMAAALSEPRDAIEDIIEPYLIQCGYLQRTPRGRLLTPHAFKHLGLAEPSREPGQFGLFGGEEEA.

Positions 1–183 (MTDPSRLVTP…FGIPVRLNFY (183 aa)) are large ATPase domain (RuvB-L). ATP contacts are provided by residues L22, R23, G64, K67, T68, T69, 130–132 (EDF), R173, Y183, and R220. T68 is a Mg(2+) binding site. The segment at 184–254 (TIEELESIVS…IADHALGALE (71 aa)) is small ATPAse domain (RuvB-S). A head domain (RuvB-H) region spans residues 257 to 348 (AAGLDAMDRR…FGLFGGEEEA (92 aa)). DNA contacts are provided by R293, R312, and R317.

This sequence belongs to the RuvB family. In terms of assembly, homohexamer. Forms an RuvA(8)-RuvB(12)-Holliday junction (HJ) complex. HJ DNA is sandwiched between 2 RuvA tetramers; dsDNA enters through RuvA and exits via RuvB. An RuvB hexamer assembles on each DNA strand where it exits the tetramer. Each RuvB hexamer is contacted by two RuvA subunits (via domain III) on 2 adjacent RuvB subunits; this complex drives branch migration. In the full resolvosome a probable DNA-RuvA(4)-RuvB(12)-RuvC(2) complex forms which resolves the HJ.

The protein localises to the cytoplasm. It carries out the reaction ATP + H2O = ADP + phosphate + H(+). In terms of biological role, the RuvA-RuvB-RuvC complex processes Holliday junction (HJ) DNA during genetic recombination and DNA repair, while the RuvA-RuvB complex plays an important role in the rescue of blocked DNA replication forks via replication fork reversal (RFR). RuvA specifically binds to HJ cruciform DNA, conferring on it an open structure. The RuvB hexamer acts as an ATP-dependent pump, pulling dsDNA into and through the RuvAB complex. RuvB forms 2 homohexamers on either side of HJ DNA bound by 1 or 2 RuvA tetramers; 4 subunits per hexamer contact DNA at a time. Coordinated motions by a converter formed by DNA-disengaged RuvB subunits stimulates ATP hydrolysis and nucleotide exchange. Immobilization of the converter enables RuvB to convert the ATP-contained energy into a lever motion, pulling 2 nucleotides of DNA out of the RuvA tetramer per ATP hydrolyzed, thus driving DNA branch migration. The RuvB motors rotate together with the DNA substrate, which together with the progressing nucleotide cycle form the mechanistic basis for DNA recombination by continuous HJ branch migration. Branch migration allows RuvC to scan DNA until it finds its consensus sequence, where it cleaves and resolves cruciform DNA. This is Holliday junction branch migration complex subunit RuvB from Rhodopseudomonas palustris (strain HaA2).